The chain runs to 170 residues: Cyclic pyranopterin monophosphate synthase (170 aa).

Substrate-binding positions include 75–77 (MCH) and 115–116 (ME). D130 is an active-site residue.

The protein belongs to the MoaC family. As to quaternary structure, homohexamer; trimer of dimers.

The enzyme catalyses (8S)-3',8-cyclo-7,8-dihydroguanosine 5'-triphosphate = cyclic pyranopterin phosphate + diphosphate. It functions in the pathway cofactor biosynthesis; molybdopterin biosynthesis. Its function is as follows. Catalyzes the conversion of (8S)-3',8-cyclo-7,8-dihydroguanosine 5'-triphosphate to cyclic pyranopterin monophosphate (cPMP). This chain is Cyclic pyranopterin monophosphate synthase, found in Bacillus subtilis (strain 168).